Consider the following 168-residue polypeptide: ADP-ribosylation factor-like protein 2-binding protein (168 aa).

This sequence belongs to the ARL2BP family.

The protein localises to the cytoplasm. Its subcellular location is the mitochondrion intermembrane space. The protein resides in the cytoskeleton. It is found in the microtubule organizing center. It localises to the centrosome. The protein localises to the nucleus. Its subcellular location is the spindle. The protein resides in the cilium basal body. Functionally, plays a role as an effector of the ADP-ribosylation factor-like protein 2, ARL2. The sequence is that of ADP-ribosylation factor-like protein 2-binding protein (arl2bp) from Danio rerio (Zebrafish).